A 448-amino-acid chain; its full sequence is Ribosomal protein uS12 methylthiotransferase RimO (448 aa).

The region spanning 7–123 (EKVSLVSLGC…IAEIIAEKEG (117 aa)) is the MTTase N-terminal domain. [4Fe-4S] cluster is bound by residues C16, C52, C86, C161, C165, and C168. Residues 147–377 (SSPYYTAYLK…MRTQARVSFK (231 aa)) enclose the Radical SAM core domain. Residues 380-448 (RSLVDTEELV…DYDLIGEIVP (69 aa)) enclose the TRAM domain.

It belongs to the methylthiotransferase family. RimO subfamily. [4Fe-4S] cluster is required as a cofactor.

It localises to the cytoplasm. It carries out the reaction L-aspartate(89)-[ribosomal protein uS12]-hydrogen + (sulfur carrier)-SH + AH2 + 2 S-adenosyl-L-methionine = 3-methylsulfanyl-L-aspartate(89)-[ribosomal protein uS12]-hydrogen + (sulfur carrier)-H + 5'-deoxyadenosine + L-methionine + A + S-adenosyl-L-homocysteine + 2 H(+). Catalyzes the methylthiolation of an aspartic acid residue of ribosomal protein uS12. In Geotalea uraniireducens (strain Rf4) (Geobacter uraniireducens), this protein is Ribosomal protein uS12 methylthiotransferase RimO.